A 314-amino-acid polypeptide reads, in one-letter code: tRNA dimethylallyltransferase (314 aa).

ATP is bound at residue 36–43; that stretch reads GPTASGKT. Position 38 to 43 (38 to 43) interacts with substrate; it reads TASGKT. The segment at 61–64 is interaction with substrate tRNA; that stretch reads DSVQ.

Belongs to the IPP transferase family. In terms of assembly, monomer. Mg(2+) serves as cofactor.

The catalysed reaction is adenosine(37) in tRNA + dimethylallyl diphosphate = N(6)-dimethylallyladenosine(37) in tRNA + diphosphate. Functionally, catalyzes the transfer of a dimethylallyl group onto the adenine at position 37 in tRNAs that read codons beginning with uridine, leading to the formation of N6-(dimethylallyl)adenosine (i(6)A). In Sorangium cellulosum (strain So ce56) (Polyangium cellulosum (strain So ce56)), this protein is tRNA dimethylallyltransferase.